A 321-amino-acid polypeptide reads, in one-letter code: Cytochrome f (321 aa).

An N-terminal signal peptide occupies residues 1–35 (MQNRKTYDDWVKKWITQSISVLIMIDIMTRTSIAN). Heme is bound by residues Y37, C57, C60, and H61. The helical transmembrane segment at 287–307 (VQGLLLFLASVVLAQIFLVLK) threads the bilayer.

It belongs to the cytochrome f family. As to quaternary structure, the 4 large subunits of the cytochrome b6-f complex are cytochrome b6, subunit IV (17 kDa polypeptide, petD), cytochrome f and the Rieske protein, while the 4 small subunits are PetG, PetL, PetM and PetN. The complex functions as a dimer. Heme serves as cofactor.

It localises to the plastid. It is found in the chloroplast thylakoid membrane. In terms of biological role, component of the cytochrome b6-f complex, which mediates electron transfer between photosystem II (PSII) and photosystem I (PSI), cyclic electron flow around PSI, and state transitions. The sequence is that of Cytochrome f from Cryptomeria japonica (Japanese cedar).